Consider the following 133-residue polypeptide: MLVAQQLGQWAEQTALKLLKEQNYEWVASNYHSRRGEVDLIVKRGNELIFVEVKARGQGNYGQACEMVTLSKQKKIIKTAMRFLQRYPSYQDFYCRFDVICFDFPQKIAKTVQQDFSKFHYDLQWIENAFTLD.

Belongs to the UPF0102 family.

The chain is UPF0102 protein AB57_1130 from Acinetobacter baumannii (strain AB0057).